A 373-amino-acid chain; its full sequence is 2-oxoglutarate oxidoreductase subunit KorB (373 aa).

Positions 26–50 are disordered; sequence TPSLTKNAGVPTTDQPQKGKDFTSD. A compositionally biased stretch (polar residues) spans 27 to 41; sequence PSLTKNAGVPTTDQP.

KG oxidoreductase (KOR) is composed of KorA and KorB subunits. Mg(2+) is required as a cofactor.

The catalysed reaction is 2 oxidized [2Fe-2S]-[ferredoxin] + 2-oxoglutarate + CoA = succinyl-CoA + 2 reduced [2Fe-2S]-[ferredoxin] + CO2 + H(+). It participates in carbohydrate metabolism; tricarboxylic acid cycle. In terms of biological role, component of KG oxidoreductase (KOR) that catalyzes the CoA-dependent oxidative decarboxylation of 2-oxoglutarate (alpha-ketoglutarate, KG) to succinyl-CoA. Methyl viologen can act as electron acceptor in vitro; the physiologic electron acceptor is unknown. Is involved in the alternative TCA pathway that functions concurrently with fatty acid beta-oxidation. Since a growing body of evidence indicates that lipids (for example cholesterol and fatty acids) are a predominant growth substrate for M.tuberculosis during infection, flux through KOR likely represents an important step in intermediary metabolism in vivo. KOR-dependent decarboxylation of KG also appears to be an important source of CO(2) in M.tuberculosis metabolism. The chain is 2-oxoglutarate oxidoreductase subunit KorB (korB) from Mycobacterium tuberculosis (strain ATCC 25618 / H37Rv).